The following is a 105-amino-acid chain: Met repressor (105 aa).

The protein belongs to the MetJ family. As to quaternary structure, homodimer.

The protein localises to the cytoplasm. In terms of biological role, this regulatory protein, when combined with SAM (S-adenosylmethionine) represses the expression of the methionine regulon and of enzymes involved in SAM synthesis. This chain is Met repressor, found in Yersinia pestis bv. Antiqua (strain Antiqua).